The following is a 132-amino-acid chain: DNA-directed RNA polymerase subunit omega (132 aa).

Belongs to the RNA polymerase subunit omega family. As to quaternary structure, the RNAP catalytic core consists of 2 alpha, 1 beta, 1 beta' and 1 omega subunit. When a sigma factor is associated with the core the holoenzyme is formed, which can initiate transcription.

The enzyme catalyses RNA(n) + a ribonucleoside 5'-triphosphate = RNA(n+1) + diphosphate. Its function is as follows. Promotes RNA polymerase assembly. Latches the N- and C-terminal regions of the beta' subunit thereby facilitating its interaction with the beta and alpha subunits. This is DNA-directed RNA polymerase subunit omega from Bartonella quintana (strain Toulouse) (Rochalimaea quintana).